Here is a 466-residue protein sequence, read N- to C-terminus: MAEPKPKLHVAVFPWLALGHMIPYLQLSKLIARKGHTVSFISTARNISRLPNISSDLSVNFVSLPLSQTVDHLPENAEATTDVPETHIAYLKKAFDGLSEAFTEFLEASKPNWIVYDILHHWVPPIAEKLGVRRAIFCTFNAASIIIIGGPASVMIQGHDPRKTAEDLIVPPPWVPFETNIVYRLFEAKRIMEYPTAGVTGVELNDNCRLGLAYVGSEVIVIRSCMELEPEWIQLLSKLQGKPVIPIGLLPATPMDDADDEGTWLDIREWLDRHQAKSVVYVALGTEVTISNEEIQGLAHGLELCRLPFFWTLRKRTRASMLLPDGFKERVKERGVIWTEWVPQTKILSHGSVGGFVTHCGWGSAVEGLSFGVPLIMFPCNLDQPLVARLLSGMNIGLEIPRNERDGLFTSASVAETIRHVVVEEEGKIYRNNAASQQKKIFGNKRLQDQYADGFIEFLENPIAGV.

UDP-alpha-D-glucose is bound by residues Thr-286, 342–344 (VPQ), 359–367 (HCGWGSAVE), and 381–384 (NLDQ).

It belongs to the UDP-glycosyltransferase family.

In Arabidopsis thaliana (Mouse-ear cress), this protein is UDP-glycosyltransferase 91B1 (UGT91B1).